The primary structure comprises 867 residues: KH domain-containing protein akap-1 (867 aa).

The chain crosses the membrane as a helical span at residues 108 to 128 (HALLIALGGFSIAALFVWYIN). Disordered regions lie at residues 145–458 (SNGL…QKRV) and 481–523 (HENA…GLTT). A compositionally biased stretch (polar residues) spans 152–162 (ATASDVQTENG). Basic and acidic residues-rich tracts occupy residues 186–211 (QQKDEDEKTQKKDAVQNEKPSIDKKQ), 218–239 (TEKKEEKTVEIHTETEETDHVA), 247–275 (SEHKEHDKKTKQKNDEPVSIDKKSEEIEV), and 298–307 (QFVKKEEPKL). Positions 336-345 (TKMNDATSPL) are enriched in polar residues. The span at 363–383 (EMEKSFNEEEFRLNESSDIDR) shows a compositional bias: basic and acidic residues. Residues 397-408 (NKNRSSQKRKGG) are compositionally biased toward basic residues. 2 stretches are compositionally biased toward basic and acidic residues: residues 441–458 (LTKEKSVEETPEKSQKRV) and 481–490 (HENASYEKSD). Residues 494–507 (LDSQNSEASSQDSG) show a composition bias toward polar residues. A KH domain is found at 528 to 595 (LPMYEFEIPN…DEINHCLQML (68 aa)). The 59-residue stretch at 689–747 (PCQNGLLCAAPVGNAWFRAVTVQYFDETDEVFVKFVDYGGYSKMARQDLRQIRTDLMSL) folds into the Tudor domain.

The protein resides in the membrane. The chain is KH domain-containing protein akap-1 from Caenorhabditis elegans.